We begin with the raw amino-acid sequence, 353 residues long: MTIAIGKSSEEPKGIFDTMDDWLRRDRFVFVGWSGLLLFPCAYFSLGGWLTGTTFVTSWYTHGLASSYLEGCNFLTAAVSTPANSMAHSLLLLWGPEAQGDFTRWCQLGGLWTFIALHGAFALIGFMLRQFELARSVQLRPYNAIAFSGPISVFVSVFLIYPLGQSGWFFAPSFGVAAIFRFILFFQGFHNWTLNPFHMMGVAGVLGAALLCAIHGATVENTLFEDGDGANTFRAFNPTQSEETYSMVTANRFWSQIFGIAFSNKRWLHFFMLFVPVTGLWMSAIGVVGLALNLRAYDFVSQEIRASEDPEFETFYTKNILLNEGIRAWMAAQDQPHENLVFPEEVLPRGNAL.

Position 2 is an N-acetylthreonine (threonine 2). Phosphothreonine is present on threonine 2. Residues cysteine 41–threonine 61 form a helical membrane-spanning segment. Histidine 118 is a chlorophyll a binding site. Residues glycine 125–proline 141 traverse the membrane as a helical segment. Residues glutamine 130 and asparagine 143 each coordinate pheophytin a. Residues valine 153–serine 166 form a helical membrane-spanning segment. Histidine 198 contacts chlorophyll a. Residues alanine 208 to aspartate 228 form a helical membrane-spanning segment. 2 residues coordinate a plastoquinone: histidine 215 and phenylalanine 262. Histidine 215 lines the Fe cation pocket. Histidine 269 contacts Fe cation. The helical transmembrane segment at glycine 279 to arginine 295 threads the bilayer.

Belongs to the reaction center PufL/M/PsbA/D family. As to quaternary structure, PSII is composed of 1 copy each of membrane proteins PsbA, PsbB, PsbC, PsbD, PsbE, PsbF, PsbH, PsbI, PsbJ, PsbK, PsbL, PsbM, PsbT, PsbX, PsbY, PsbZ, Psb30/Ycf12, at least 3 peripheral proteins of the oxygen-evolving complex and a large number of cofactors. It forms dimeric complexes. The D1/D2 heterodimer binds P680, chlorophylls that are the primary electron donor of PSII, and subsequent electron acceptors. It shares a non-heme iron and each subunit binds pheophytin, quinone, additional chlorophylls, carotenoids and lipids. There is also a Cl(-1) ion associated with D1 and D2, which is required for oxygen evolution. The PSII complex binds additional chlorophylls, carotenoids and specific lipids. is required as a cofactor.

Its subcellular location is the plastid. It localises to the chloroplast thylakoid membrane. It carries out the reaction 2 a plastoquinone + 4 hnu + 2 H2O = 2 a plastoquinol + O2. Photosystem II (PSII) is a light-driven water:plastoquinone oxidoreductase that uses light energy to abstract electrons from H(2)O, generating O(2) and a proton gradient subsequently used for ATP formation. It consists of a core antenna complex that captures photons, and an electron transfer chain that converts photonic excitation into a charge separation. The D1/D2 (PsbA/PsbD) reaction center heterodimer binds P680, the primary electron donor of PSII as well as several subsequent electron acceptors. D2 is needed for assembly of a stable PSII complex. This chain is Photosystem II D2 protein, found in Chara vulgaris (Common stonewort).